A 974-amino-acid polypeptide reads, in one-letter code: UvrABC system protein A (974 aa).

Residue 34–41 (GLSGSGKS) participates in ATP binding. 2 consecutive ABC transporter domains span residues 331–610 (WARS…TNSL) and 630–959 (ISKT…QFLK). Residue 663 to 670 (GVSGGGKS) coordinates ATP. Residues 762 to 788 (CEACQGDGVIKIEMHFLPDVYVTCDVC) form a C4-type zinc finger.

Belongs to the ABC transporter superfamily. UvrA family. Forms a heterotetramer with UvrB during the search for lesions.

It is found in the cytoplasm. Its function is as follows. The UvrABC repair system catalyzes the recognition and processing of DNA lesions. UvrA is an ATPase and a DNA-binding protein. A damage recognition complex composed of 2 UvrA and 2 UvrB subunits scans DNA for abnormalities. When the presence of a lesion has been verified by UvrB, the UvrA molecules dissociate. The protein is UvrABC system protein A of Brucella abortus (strain 2308).